Reading from the N-terminus, the 91-residue chain is Putative regulatory protein Cyan7425_4125 (91 aa).

The protein belongs to the RemA family.

This chain is Putative regulatory protein Cyan7425_4125, found in Cyanothece sp. (strain PCC 7425 / ATCC 29141).